Consider the following 249-residue polypeptide: Indole-3-glycerol phosphate synthase (249 aa).

Belongs to the TrpC family.

It catalyses the reaction 1-(2-carboxyphenylamino)-1-deoxy-D-ribulose 5-phosphate + H(+) = (1S,2R)-1-C-(indol-3-yl)glycerol 3-phosphate + CO2 + H2O. It participates in amino-acid biosynthesis; L-tryptophan biosynthesis; L-tryptophan from chorismate: step 4/5. This chain is Indole-3-glycerol phosphate synthase, found in Pyrobaculum neutrophilum (strain DSM 2338 / JCM 9278 / NBRC 100436 / V24Sta) (Thermoproteus neutrophilus).